The chain runs to 441 residues: 3-oxo-glucose-6-phosphate:glutamate aminotransferase (441 aa).

98–99 provides a ligand contact to substrate; sequence TS. Pyridoxal 5'-phosphate is bound at residue 125–126; that stretch reads GT. F151 serves as a coordination point for substrate. Pyridoxal 5'-phosphate-binding residues include Q225 and S242. 244–246 serves as a coordination point for substrate; the sequence is NPY. N6-(pyridoxal phosphate)lysine is present on K247. Y274 and K282 together coordinate substrate. N292 serves as a coordination point for pyridoxal 5'-phosphate. Residue Y379 coordinates substrate.

It belongs to the DegT/DnrJ/EryC1 family. In terms of assembly, homodimer. Pyridoxal 5'-phosphate is required as a cofactor.

The enzyme catalyses 3-dehydro-D-glucose 6-phosphate + L-glutamate = D-kanosamine 6-phosphate + 2-oxoglutarate. It functions in the pathway antibiotic biosynthesis; kanosamine biosynthesis. Functionally, involved in the biosynthesis of kanosamine (3-amino-3-deoxy-D-glucose), which is known to have antibiotic and antifungal properties, and to be a precursor of the antibiotic neotrehalosadiamine (3,3'-diamino-3,3'-dideoxy-alpha,beta-trehalose (NTD)). Catalyzes the reversible pyridoxal phosphate-dependent transamination of 3-dehydro-alpha-D-glucose 6-phosphate to form alpha-D-kanosamine-6-phosphate. It can only use alpha-anomer and glutamate is the only amino donor. The sequence is that of 3-oxo-glucose-6-phosphate:glutamate aminotransferase (ntdA) from Bacillus subtilis (strain 168).